The sequence spans 256 residues: 5-oxoprolinase subunit A 3 (256 aa).

The protein belongs to the LamB/PxpA family. Forms a complex composed of PxpA, PxpB and PxpC.

It catalyses the reaction 5-oxo-L-proline + ATP + 2 H2O = L-glutamate + ADP + phosphate + H(+). Catalyzes the cleavage of 5-oxoproline to form L-glutamate coupled to the hydrolysis of ATP to ADP and inorganic phosphate. The sequence is that of 5-oxoprolinase subunit A 3 from Pseudomonas syringae pv. tomato (strain ATCC BAA-871 / DC3000).